A 740-amino-acid chain; its full sequence is MLKLFSAFRKNKIWDFNGGIHPPEMKTQSNGTPLRQVPLAQRFVIPLKQHIGAEGELCVSVGDKVLRGQPLTRGRGKMLPVHAPTSGTVTAIAPHSTAHPSALAELSVIIDADGEDCWIPRDGWADYRTRSREELIERIHQFGVAGLGGAGFPTGVKLQGGGDKIETLIINAAECEPYITADDRLMQDCAAQVVEGIRILAHILQPREILIGIEDNKPQAISMLRAVLADSNDISLRVIPTKYPSGGAKQLTYILTGKQVPHGGRSSDIGVLMQNVGTAYAVKRAVIDGEPITERVVTLTGEAIARPGNVWARLGTPVRHLLNDAGFCPSADQMVIMGGPLMGFTLPWLDVPVVKITNCLLAPSANELGEPQEEQSCIRCSACADACPADLLPQQLYWFSKGQQHDKATTHNIADCIECGACAWVCPSNIPLVQYFRQEKAEIAAIRQEEKRAAEAKARFEARQARLEREKAARLERHKSAAVQPAAKDKDAIAAALARVKEKQAQATQPIVIKAGERPDNSAIIAAREARKAQARAKQAELQQTNDAATVADPRKTAVEAAIARAKARKLEQQQANAEPEEQVDPRKAAVEAAIARAKARKLEQQQANAEPEQQVDPRKAAVEAAIARAKARKLEQQQANAEPEQQVDPRKAAVEAAIARAKARKREQQPANAEPEEQVDPRKAAVEAAIARAKARKLEQQQANAVPEEQVDPRKAAVAAAIARAQAKKAAQQKVVNED.

2 4Fe-4S ferredoxin-type domains span residues 369 to 397 and 407 to 436; these read GEPQ…QQLY and KATT…VQYF. Cys377, Cys380, Cys383, Cys387, Cys416, Cys419, Cys422, and Cys426 together coordinate [4Fe-4S] cluster. The interval 602-717 is disordered; that stretch reads KLEQQQANAE…PEEQVDPRKA (116 aa). 2 stretches are compositionally biased toward low complexity: residues 605–615 and 637–647; these read QQQANAEPEQQ.

It belongs to the 4Fe4S bacterial-type ferredoxin family. RnfC subfamily. As to quaternary structure, the complex is composed of six subunits: RsxA, RsxB, RsxC, RsxD, RsxE and RsxG. [4Fe-4S] cluster is required as a cofactor.

The protein resides in the cell inner membrane. Its function is as follows. Part of a membrane-bound complex that couples electron transfer with translocation of ions across the membrane. Required to maintain the reduced state of SoxR. This is Ion-translocating oxidoreductase complex subunit C from Escherichia coli (strain ATCC 8739 / DSM 1576 / NBRC 3972 / NCIMB 8545 / WDCM 00012 / Crooks).